The chain runs to 265 residues: Octanoyltransferase (265 aa).

In terms of domain architecture, BPL/LPL catalytic spans 35–254 (DEVPDTVLLL…HLRDVLENAE (220 aa)). Substrate contacts are provided by residues 73–80 (RGGKITWH), 184–186 (AIG), and 197–199 (GFA). The Acyl-thioester intermediate role is filled by Cys215.

It belongs to the LipB family.

The protein resides in the cytoplasm. It carries out the reaction octanoyl-[ACP] + L-lysyl-[protein] = N(6)-octanoyl-L-lysyl-[protein] + holo-[ACP] + H(+). It functions in the pathway protein modification; protein lipoylation via endogenous pathway; protein N(6)-(lipoyl)lysine from octanoyl-[acyl-carrier-protein]: step 1/2. Its function is as follows. Catalyzes the transfer of endogenously produced octanoic acid from octanoyl-acyl-carrier-protein onto the lipoyl domains of lipoate-dependent enzymes. Lipoyl-ACP can also act as a substrate although octanoyl-ACP is likely to be the physiological substrate. The protein is Octanoyltransferase of Streptomyces coelicolor (strain ATCC BAA-471 / A3(2) / M145).